Here is a 450-residue protein sequence, read N- to C-terminus: RUN domain-containing protein 3B (450 aa).

Residues 48-180 (DDTSAEFINF…IDFSFCLKGE (133 aa)) form the RUN domain. The segment at 203–225 (DSISSDEEEMRTLGSSGSEAGTP) is disordered. Residues 291 to 317 (ISHKLEKEQLEIIILELQDQLTVLKNH) adopt a coiled-coil conformation.

Belongs to the RUNDC3 family.

This is RUN domain-containing protein 3B (rundc3b) from Danio rerio (Zebrafish).